A 164-amino-acid chain; its full sequence is Cytochrome c-type biogenesis protein CcmE (164 aa).

The Cytoplasmic portion of the chain corresponds to 1–8 (MNPRRKSR). Residues 9–29 (LYLAMVVLIGISLTTTLVLYA) traverse the membrane as a helical; Signal-anchor for type II membrane protein segment. Residues 30–164 (LRSNIDLFYT…RGTNTTGNAL (135 aa)) are Periplasmic-facing. 2 residues coordinate heme: H130 and Y134. The disordered stretch occupies residues 140–164 (EEAMKENHSRPAAAYRGTNTTGNAL).

It belongs to the CcmE/CycJ family.

It localises to the cell inner membrane. Its function is as follows. Heme chaperone required for the biogenesis of c-type cytochromes. Transiently binds heme delivered by CcmC and transfers the heme to apo-cytochromes in a process facilitated by CcmF and CcmH. This chain is Cytochrome c-type biogenesis protein CcmE, found in Yersinia pseudotuberculosis serotype O:3 (strain YPIII).